Reading from the N-terminus, the 318-residue chain is Ribosomal RNA small subunit methyltransferase H (318 aa).

S-adenosyl-L-methionine is bound by residues 35-37, Asp-55, Phe-84, Asp-105, and Gln-112; that span reads AGH. Positions 294-318 are disordered; it reads SDSELSENNRSRSAKLRIAEKIKSR.

It belongs to the methyltransferase superfamily. RsmH family.

The protein resides in the cytoplasm. The enzyme catalyses cytidine(1402) in 16S rRNA + S-adenosyl-L-methionine = N(4)-methylcytidine(1402) in 16S rRNA + S-adenosyl-L-homocysteine + H(+). In terms of biological role, specifically methylates the N4 position of cytidine in position 1402 (C1402) of 16S rRNA. This Enterococcus faecalis (strain ATCC 700802 / V583) protein is Ribosomal RNA small subunit methyltransferase H.